Here is a 39-residue protein sequence, read N- to C-terminus: Potassium channel toxin alpha-KTx 2.8 (39 aa).

Intrachain disulfides connect Cys7-Cys29, Cys13-Cys34, and Cys17-Cys36.

Belongs to the short scorpion toxin superfamily. Potassium channel inhibitor family. Alpha-KTx 02 subfamily. As to expression, expressed by the venom gland.

It localises to the secreted. Functionally, blocks Kv1.3/KCNA3 voltage-gated potassium channels of human T-lymphocytes (Kd=0.71 nM). The chain is Potassium channel toxin alpha-KTx 2.8 from Centruroides elegans (Bark scorpion).